The chain runs to 292 residues: Phosphatidylserine decarboxylase proenzyme (292 aa).

Residues D89, H146, and S252 each act as charge relay system; for autoendoproteolytic cleavage activity in the active site. The Schiff-base intermediate with substrate; via pyruvic acid; for decarboxylase activity role is filled by S252. Position 252 is a pyruvic acid (Ser); by autocatalysis (S252).

The protein belongs to the phosphatidylserine decarboxylase family. PSD-B subfamily. Prokaryotic type I sub-subfamily. As to quaternary structure, heterodimer of a large membrane-associated beta subunit and a small pyruvoyl-containing alpha subunit. Requires pyruvate as cofactor. Is synthesized initially as an inactive proenzyme. Formation of the active enzyme involves a self-maturation process in which the active site pyruvoyl group is generated from an internal serine residue via an autocatalytic post-translational modification. Two non-identical subunits are generated from the proenzyme in this reaction, and the pyruvate is formed at the N-terminus of the alpha chain, which is derived from the carboxyl end of the proenzyme. The autoendoproteolytic cleavage occurs by a canonical serine protease mechanism, in which the side chain hydroxyl group of the serine supplies its oxygen atom to form the C-terminus of the beta chain, while the remainder of the serine residue undergoes an oxidative deamination to produce ammonia and the pyruvoyl prosthetic group on the alpha chain. During this reaction, the Ser that is part of the protease active site of the proenzyme becomes the pyruvoyl prosthetic group, which constitutes an essential element of the active site of the mature decarboxylase.

Its subcellular location is the cell membrane. It carries out the reaction a 1,2-diacyl-sn-glycero-3-phospho-L-serine + H(+) = a 1,2-diacyl-sn-glycero-3-phosphoethanolamine + CO2. Its pathway is phospholipid metabolism; phosphatidylethanolamine biosynthesis; phosphatidylethanolamine from CDP-diacylglycerol: step 2/2. In terms of biological role, catalyzes the formation of phosphatidylethanolamine (PtdEtn) from phosphatidylserine (PtdSer). This Shewanella sp. (strain MR-4) protein is Phosphatidylserine decarboxylase proenzyme.